The chain runs to 38 residues: Photosystem II reaction center protein M (38 aa).

The helical transmembrane segment at 5–25 threads the bilayer; that stretch reads ILGLIATALFIVIPTSFLLIL.

Belongs to the PsbM family. PSII is composed of 1 copy each of membrane proteins PsbA, PsbB, PsbC, PsbD, PsbE, PsbF, PsbH, PsbI, PsbJ, PsbK, PsbL, PsbM, PsbT, PsbX, PsbY, PsbZ, Psb30/Ycf12, at least 3 peripheral proteins of the oxygen-evolving complex and a large number of cofactors. It forms dimeric complexes.

It is found in the plastid. It localises to the cyanelle thylakoid membrane. In terms of biological role, one of the components of the core complex of photosystem II (PSII). PSII is a light-driven water:plastoquinone oxidoreductase that uses light energy to abstract electrons from H(2)O, generating O(2) and a proton gradient subsequently used for ATP formation. It consists of a core antenna complex that captures photons, and an electron transfer chain that converts photonic excitation into a charge separation. This subunit is found at the monomer-monomer interface. The chain is Photosystem II reaction center protein M from Cyanophora paradoxa.